Consider the following 233-residue polypeptide: Large ribosomal subunit protein uL1 (233 aa).

This sequence belongs to the universal ribosomal protein uL1 family. As to quaternary structure, part of the 50S ribosomal subunit.

Binds directly to 23S rRNA. The L1 stalk is quite mobile in the ribosome, and is involved in E site tRNA release. Its function is as follows. Protein L1 is also a translational repressor protein, it controls the translation of the L11 operon by binding to its mRNA. This Rhizobium johnstonii (strain DSM 114642 / LMG 32736 / 3841) (Rhizobium leguminosarum bv. viciae) protein is Large ribosomal subunit protein uL1.